Reading from the N-terminus, the 737-residue chain is Polyribonucleotide nucleotidyltransferase (737 aa).

Residues Asp-514 and Asp-520 each contribute to the Mg(2+) site. The 60-residue stretch at 580–639 (PRIITVKIPVDKIGEVIGPKGKMINQIQEDTGADITIEDDGTIYIGAQAGSQAEAARATI) folds into the KH domain. The 73-residue stretch at 651–723 (GERYLGTVVK…SRGKLSLIPV (73 aa)) folds into the S1 motif domain.

It belongs to the polyribonucleotide nucleotidyltransferase family. It depends on Mg(2+) as a cofactor.

Its subcellular location is the cytoplasm. The enzyme catalyses RNA(n+1) + phosphate = RNA(n) + a ribonucleoside 5'-diphosphate. Functionally, involved in mRNA degradation. Catalyzes the phosphorolysis of single-stranded polyribonucleotides processively in the 3'- to 5'-direction. This is Polyribonucleotide nucleotidyltransferase from Streptomyces griseus subsp. griseus (strain JCM 4626 / CBS 651.72 / NBRC 13350 / KCC S-0626 / ISP 5235).